The following is a 250-amino-acid chain: MNFTVIIPARYASSRLPRKPLLDIAGKPMIQHVWEKAQQAGATRVIIATDHPEIEATAKAFGAEVCMTSDQHNSGTERLAEVIEKMQIADNEIIVNVQGDEPLIPPVIVSQVAENLDRCQVNMATLAVKLTTKEELFNPNAVKALADKNGMALYFSRAPIPFARDHFADCDDAFVASQNYLRHIGIYAYRAGFVKQYVAWQPTQLEQLESLEQLRALWYGEKIHIELAKQAPQVGVDTQEDLERVRRILA.

The protein belongs to the KdsB family.

The protein resides in the cytoplasm. The catalysed reaction is 3-deoxy-alpha-D-manno-oct-2-ulosonate + CTP = CMP-3-deoxy-beta-D-manno-octulosonate + diphosphate. It functions in the pathway nucleotide-sugar biosynthesis; CMP-3-deoxy-D-manno-octulosonate biosynthesis; CMP-3-deoxy-D-manno-octulosonate from 3-deoxy-D-manno-octulosonate and CTP: step 1/1. Its pathway is bacterial outer membrane biogenesis; lipopolysaccharide biosynthesis. Its function is as follows. Activates KDO (a required 8-carbon sugar) for incorporation into bacterial lipopolysaccharide in Gram-negative bacteria. This is 3-deoxy-manno-octulosonate cytidylyltransferase from Actinobacillus pleuropneumoniae serotype 7 (strain AP76).